The chain runs to 387 residues: Proline-rich protein 5 (387 aa).

Interaction with RICTOR regions lie at residues 10-96 (MSSP…LTKG) and 189-219 (HESRGVTEDYLRLETLIQKVVSPYLGTYGLY). Residues 11–33 (SSPSLSDLGKREPGAAGADERGT) are disordered. Basic and acidic residues predominate over residues 18–33 (LGKREPGAAGADERGT). Residue serine 253 is modified to Phosphoserine. Disordered regions lie at residues 262–347 (NPVA…PETL) and 365–387 (DFGRGSRSSVSDFEAAGGRPSVV). The span at 310–321 (SSPSPHSGPCPS) shows a compositional bias: low complexity. Serine 373 carries the phosphoserine modification.

Belongs to the PROTOR family. Associated component of the mechanistic target of rapamycin complex 2 (mTORC2). Binds directly to MTOR and RICTOR within the TORC2 complex.

Functionally, associated subunit of mTORC2, which regulates cell growth and survival in response to hormonal signals. mTORC2 is activated by growth factors, but, in contrast to mTORC1, seems to be nutrient-insensitive. mTORC2 seems to function upstream of Rho GTPases to regulate the actin cytoskeleton, probably by activating one or more Rho-type guanine nucleotide exchange factors. PRR5 plays an important role in regulation of PDGFRB expression and in modulation of platelet-derived growth factor signaling. May act as a tumor suppressor in breast cancer. In Rattus norvegicus (Rat), this protein is Proline-rich protein 5.